The chain runs to 209 residues: V-type ATP synthase subunit D (209 aa).

This sequence belongs to the V-ATPase D subunit family.

In terms of biological role, produces ATP from ADP in the presence of a proton gradient across the membrane. This is V-type ATP synthase subunit D from Anaeromyxobacter dehalogenans (strain 2CP-C).